Here is a 369-residue protein sequence, read N- to C-terminus: Septin-5 (369 aa).

Threonine 13 bears the Phosphothreonine mark. Positions 41 to 314 (KGFDFTLMVA…ENYRAHCIQQ (274 aa)) constitute a Septin-type G domain. The G1 motif stretch occupies residues 51–58 (GESGLGKS). Residues 51–58 (GESGLGKS), threonine 85, and glycine 111 contribute to the GTP site. A G3 motif region spans residues 108–111 (DTPG). Arginine 168 carries the post-translational modification Omega-N-methylarginine. A G4 motif region spans residues 189–192 (AKAD). 190–198 (KADCLVPSE) contributes to the GTP binding site. Residue serine 225 is modified to Phosphoserine. 2 residues coordinate GTP: glycine 248 and arginine 263. At serine 327 the chain carries Phosphoserine. The residue at position 336 (threonine 336) is a Phosphothreonine. Residues 338–369 (DSETEKLIRMKDEELRRMQEMLQKMKQRMQDQ) are a coiled coil.

It belongs to the TRAFAC class TrmE-Era-EngA-EngB-Septin-like GTPase superfamily. Septin GTPase family. In terms of assembly, septins polymerize into heterooligomeric protein complexes that form filaments, and can associate with cellular membranes, actin filaments and microtubules. GTPase activity is required for filament formation. Interacts with SEPTIN2 and SEPTIN5. In platelets, associated with a complex containing STX4. Interacts with PRKN; this interaction leads to SEPTIN5 ubiquitination and degradation. Interacts with DYRK1A. Interacts with STX1A; in the cerebellar cortex. In terms of processing, phosphorylated by DYRK1A. In terms of tissue distribution, expressed in brain and testis and at lower level in heart, spleen, lung and kidney.

It is found in the cytoplasm. Its subcellular location is the cytoskeleton. In terms of biological role, filament-forming cytoskeletal GTPase. May play a role in cytokinesis (Potential). May play a role in platelet secretion. In Rattus norvegicus (Rat), this protein is Septin-5.